Reading from the N-terminus, the 168-residue chain is Shikimate kinase (168 aa).

G10–T15 is a binding site for ATP. T14 serves as a coordination point for Mg(2+). Substrate is bound by residues D32, R56, and G77. Residue R115 participates in ATP binding. R133 contributes to the substrate binding site.

This sequence belongs to the shikimate kinase family. Monomer. Mg(2+) serves as cofactor.

The protein localises to the cytoplasm. The catalysed reaction is shikimate + ATP = 3-phosphoshikimate + ADP + H(+). It participates in metabolic intermediate biosynthesis; chorismate biosynthesis; chorismate from D-erythrose 4-phosphate and phosphoenolpyruvate: step 5/7. Functionally, catalyzes the specific phosphorylation of the 3-hydroxyl group of shikimic acid using ATP as a cosubstrate. In Macrococcus caseolyticus (strain JCSC5402) (Macrococcoides caseolyticum), this protein is Shikimate kinase.